We begin with the raw amino-acid sequence, 104 residues long: DNA-directed RNA polymerase subunit Rpo13 (104 aa).

Disordered regions lie at residues 1–34 (MVSGMSTEEEKEGTNDEEVSEEREVEETSEEEFP) and 76–104 (EKRDSRRKAKKAASKKVKKTKKKEKSVEG). Positions 7 to 31 (TEEEKEGTNDEEVSEEREVEETSEE) are enriched in acidic residues. Glutamate 32 provides a ligand contact to DNA. A compositionally biased stretch (basic residues) spans 80–104 (SRRKAKKAASKKVKKTKKKEKSVEG). Residues 81–104 (RRKAKKAASKKVKKTKKKEKSVEG) form a required to bind DNA region.

Belongs to the archaeal Rpo13 RNA polymerase subunit family. Part of the 13-subunit RNA polymerase complex. Rpo1N and Rpo5 form a cleft which docks Rpo13. Forms predominantly dimers in solution, although monomers and trimers can also be seen. Found associated with RNAP but also as a homodimer pool in the cytoplasm in vivo.

It is found in the cytoplasm. The catalysed reaction is RNA(n) + a ribonucleoside 5'-triphosphate = RNA(n+1) + diphosphate. In terms of biological role, DNA-dependent RNA polymerase (RNAP) catalyzes the transcription of DNA into RNA using the four ribonucleoside triphosphates as substrates. A molten-globule protein, it binds dsDNA in the RNAP, in vitro binds dsDNA but not ssDNA. Its position in RNAP implies it functions in both transcription initiation and elongation. The protein is DNA-directed RNA polymerase subunit Rpo13 of Saccharolobus shibatae (strain ATCC 51178 / DSM 5389 / JCM 8931 / NBRC 15437 / B12) (Sulfolobus shibatae).